Here is a 905-residue protein sequence, read N- to C-terminus: DNA gyrase subunit A (905 aa).

The 490-residue stretch at 35 to 524 (IPDVRDGLKP…GEFDQDIEDL (490 aa)) folds into the Topo IIA-type catalytic domain. Residue tyrosine 123 is the O-(5'-phospho-DNA)-tyrosine intermediate of the active site. The GyrA-box signature appears at 551 to 557 (QKRGGKG).

It belongs to the type II topoisomerase GyrA/ParC subunit family. In terms of assembly, heterotetramer, composed of two GyrA and two GyrB chains. In the heterotetramer, GyrA contains the active site tyrosine that forms a transient covalent intermediate with DNA, while GyrB binds cofactors and catalyzes ATP hydrolysis.

It is found in the cytoplasm. It carries out the reaction ATP-dependent breakage, passage and rejoining of double-stranded DNA.. Its function is as follows. A type II topoisomerase that negatively supercoils closed circular double-stranded (ds) DNA in an ATP-dependent manner to modulate DNA topology and maintain chromosomes in an underwound state. Negative supercoiling favors strand separation, and DNA replication, transcription, recombination and repair, all of which involve strand separation. Also able to catalyze the interconversion of other topological isomers of dsDNA rings, including catenanes and knotted rings. Type II topoisomerases break and join 2 DNA strands simultaneously in an ATP-dependent manner. This is DNA gyrase subunit A from Rickettsia typhi (strain ATCC VR-144 / Wilmington).